Here is a 61-residue protein sequence, read N- to C-terminus: Protein TfaX (61 aa).

Belongs to the tfa family.

Might play a role in cell growth during glycolysis. The chain is Protein TfaX (tfaX) from Escherichia coli (strain K12).